The sequence spans 523 residues: Protein tweety homolog 3 (523 aa).

Residues 1-42 (MAGVSYAAPWWVSLLHRLPHFDLSWEATSSQFRPEDTDYQQA) lie on the Extracellular side of the membrane. Residues 43-63 (LLLLGAAALACLALDLLFLLF) form a helical membrane-spanning segment. The Cytoplasmic portion of the chain corresponds to 64-86 (YSFWLCCRRRKSEEHLDADCCCT). A helical transmembrane segment spans residues 87–107 (AWCVIIATLVCSAGIAVGFYG). Over 108–211 (NGETSDGIHR…VDLYDWYRWL (104 aa)) the chain is Extracellular. Ca(2+)-binding residues include glutamate 110 and aspartate 113. 2 N-linked (GlcNAc...) asparagine glycosylation sites follow: asparagine 126 and asparagine 144. Residues 212–232 (GYLGLLLLDVIICLLVLVGLI) form a helical membrane-spanning segment. Residues 233 to 236 (RSSK) are Cytoplasmic-facing. The helical transmembrane segment at 237 to 257 (GILVGVCLLGVLALVISWGAL) threads the bilayer. The Extracellular portion of the chain corresponds to 258–386 (GLELAVSVGS…LTGFCYDGVE (129 aa)). Disulfide bonds link cysteine 271-cysteine 381 and cysteine 299-cysteine 366. An N-linked (GlcNAc...) asparagine glycan is attached at asparagine 351. Residues 387–407 (GLIYLALFSFVTALMFSSIVC) traverse the membrane as a helical segment. At 408-523 (SVPHTWQQKR…QPRPDSSGSH (116 aa)) the chain is on the cytoplasmic side. Disordered stretches follow at residues 413–435 (WQQKRGPDEDGEEEAAPGPRQAH) and 482–523 (QNPR…SGSH). At serine 496 the chain carries Phosphoserine. A PY-motif; mediates interaction with NEDD4L motif is present at residues 498 to 501 (PPSY). Residues 501–523 (YTSSMRAKYLATSQPRPDSSGSH) are compositionally biased toward polar residues. Serine 504 and serine 522 each carry phosphoserine.

The protein belongs to the tweety family. In terms of assembly, homotetramer; disulfide-linked. Homodimer. Interacts with NEDD4L. In terms of processing, ubiquitinated by NEDD4L. N-Glycosylated. Contains high-mannose, hybrid and complex oligosaccharides. Expressed in excitable tissues. Expressed in the brain, heart, skeletal muscle, colon, spleen, kidney and peripheral blood leukocytes.

Its subcellular location is the cell membrane. It catalyses the reaction chloride(in) = chloride(out). The catalysed reaction is L-glutamate(out) = L-glutamate(in). In terms of biological role, calcium-independent, swelling-dependent volume-regulated anion channel (VRAC-swell) which plays a pivotal role in the process of regulatory volume decrease (RVD) in the brain through the efflux of anions like chloride and organic osmolytes like glutamate. Probable large-conductance Ca(2+)-activated chloride channel. The sequence is that of Protein tweety homolog 3 (TTYH3) from Homo sapiens (Human).